The following is a 593-amino-acid chain: Methionine--tRNA ligase (593 aa).

Positions 7 to 17 (PYANGPRHIGH) match the 'HIGH' region motif. Residues C139, C142, C152, and C155 each coordinate Zn(2+). Positions 343 to 347 (KFSTS) match the 'KMSKS' region motif. T346 serves as a coordination point for ATP.

The protein belongs to the class-I aminoacyl-tRNA synthetase family. MetG type 1 subfamily. In terms of assembly, monomer. Zn(2+) serves as cofactor.

It localises to the cytoplasm. The catalysed reaction is tRNA(Met) + L-methionine + ATP = L-methionyl-tRNA(Met) + AMP + diphosphate. Is required not only for elongation of protein synthesis but also for the initiation of all mRNA translation through initiator tRNA(fMet) aminoacylation. This Saccharopolyspora erythraea (strain ATCC 11635 / DSM 40517 / JCM 4748 / NBRC 13426 / NCIMB 8594 / NRRL 2338) protein is Methionine--tRNA ligase.